The following is a 369-amino-acid chain: 2-aminoethylphosphonate--pyruvate transaminase 1 (369 aa).

The residue at position 191 (K191) is an N6-(pyridoxal phosphate)lysine.

Belongs to the class-V pyridoxal-phosphate-dependent aminotransferase family. PhnW subfamily. As to quaternary structure, homodimer. Requires pyridoxal 5'-phosphate as cofactor.

The catalysed reaction is (2-aminoethyl)phosphonate + pyruvate = phosphonoacetaldehyde + L-alanine. Its function is as follows. Involved in phosphonate degradation. This chain is 2-aminoethylphosphonate--pyruvate transaminase 1, found in Burkholderia lata (strain ATCC 17760 / DSM 23089 / LMG 22485 / NCIMB 9086 / R18194 / 383).